Here is a 358-residue protein sequence, read N- to C-terminus: MKPSILEKLQQLGDRLEEVTHLLGQPEATSDMDNYRKLTREHAELTPVVEVFQNYRLAQSDLADAEEMLSDPEMKDFAAEEIEAAKAKIDELDTELQKLLLPKDADDDKNIFIEIRAGTGGGEAALFAGDLLRMYSRYAERNRWQVEIVSANESELGGYKEVIARIVGLGAYSRLKFESGGHRVQRVPATESQGRIHTSACTVAVMPEADELEDIELNPADLRTDTFRASGAGGQHINKTDSAVRITHLPTGMVVECQDGRSQHANKAQAMKVLAARLNDAQKREVQAKEAAERKSLIGSGDRSERIRTYNYPQGRVTDHRINLTLHKLDFVMDGDLAEITDALIAEHQAELLAAMGD.

N5-methylglutamine is present on Gln-235.

The protein belongs to the prokaryotic/mitochondrial release factor family. In terms of processing, methylated by PrmC. Methylation increases the termination efficiency of RF1.

It is found in the cytoplasm. Its function is as follows. Peptide chain release factor 1 directs the termination of translation in response to the peptide chain termination codons UAG and UAA. This Neisseria gonorrhoeae (strain NCCP11945) protein is Peptide chain release factor 1.